A 155-amino-acid polypeptide reads, in one-letter code: Ribosome maturation factor RimP (155 aa).

This sequence belongs to the RimP family.

The protein resides in the cytoplasm. Required for maturation of 30S ribosomal subunits. The chain is Ribosome maturation factor RimP from Synechococcus sp. (strain CC9605).